The sequence spans 513 residues: Bifunctional purine biosynthesis protein PurH (513 aa).

The MGS-like domain occupies 1–144; the sequence is MKRALVSVSD…KNYRDVTIVV (144 aa).

Belongs to the PurH family.

It catalyses the reaction (6R)-10-formyltetrahydrofolate + 5-amino-1-(5-phospho-beta-D-ribosyl)imidazole-4-carboxamide = 5-formamido-1-(5-phospho-D-ribosyl)imidazole-4-carboxamide + (6S)-5,6,7,8-tetrahydrofolate. It carries out the reaction IMP + H2O = 5-formamido-1-(5-phospho-D-ribosyl)imidazole-4-carboxamide. It functions in the pathway purine metabolism; IMP biosynthesis via de novo pathway; 5-formamido-1-(5-phospho-D-ribosyl)imidazole-4-carboxamide from 5-amino-1-(5-phospho-D-ribosyl)imidazole-4-carboxamide (10-formyl THF route): step 1/1. Its pathway is purine metabolism; IMP biosynthesis via de novo pathway; IMP from 5-formamido-1-(5-phospho-D-ribosyl)imidazole-4-carboxamide: step 1/1. The polypeptide is Bifunctional purine biosynthesis protein PurH (Lactobacillus delbrueckii subsp. bulgaricus (strain ATCC BAA-365 / Lb-18)).